The primary structure comprises 239 residues: Large ribosomal subunit protein uL30 (239 aa).

Positions 1–37 are disordered; sequence MSKFVPENVQKKLARDEKLRKAKAEQRKASSAQMKQR. Residues 9–28 are compositionally biased toward basic and acidic residues; sequence VQKKLARDEKLRKAKAEQRK.

It belongs to the universal ribosomal protein uL30 family.

In Tetrahymena thermophila, this protein is Large ribosomal subunit protein uL30 (RPL7).